Consider the following 395-residue polypeptide: Univin (395 aa).

An N-terminal signal peptide occupies residues 1 to 19; the sequence is MDVSKVLILTLIWLLTADS. Residues 20-272 constitute a propeptide that is removed on maturation; it reads APPDYVTLTR…CSKRNRRNKR (253 aa). The N-linked (GlcNAc...) asparagine glycan is linked to N50. Positions 69-97 are disordered; the sequence is EGAAASRGGETEIGKEEEEDGRPCSETKL. N-linked (GlcNAc...) asparagine glycosylation is found at N116 and N336. Disulfide bonds link C294-C360, C323-C392, and C327-C394.

This sequence belongs to the TGF-beta family. In terms of assembly, homodimer; disulfide-linked.

The protein localises to the secreted. Its function is as follows. Could have a critical role in early developmental decisions in the sea urchin embryo. This chain is Univin, found in Strongylocentrotus purpuratus (Purple sea urchin).